We begin with the raw amino-acid sequence, 427 residues long: Adenylosuccinate synthetase (427 aa).

Residues 12-18 and 40-42 each bind GTP; these read GDEGKGK and GHT. The Proton acceptor role is filled by D13. Mg(2+)-binding residues include D13 and G40. Residues 13 to 16, 38 to 41, T128, R142, Q223, T238, and R302 each bind IMP; these read DEGK and NAGH. The Proton donor role is filled by H41. 298 to 304 lines the substrate pocket; the sequence is VTTGRAR. Residues R304, 330 to 332, and 412 to 414 contribute to the GTP site; these read KLD and GVG.

It belongs to the adenylosuccinate synthetase family. In terms of assembly, homodimer. It depends on Mg(2+) as a cofactor.

The protein localises to the cytoplasm. It carries out the reaction IMP + L-aspartate + GTP = N(6)-(1,2-dicarboxyethyl)-AMP + GDP + phosphate + 2 H(+). It participates in purine metabolism; AMP biosynthesis via de novo pathway; AMP from IMP: step 1/2. Functionally, plays an important role in the de novo pathway of purine nucleotide biosynthesis. Catalyzes the first committed step in the biosynthesis of AMP from IMP. The polypeptide is Adenylosuccinate synthetase (Frankia alni (strain DSM 45986 / CECT 9034 / ACN14a)).